Here is a 251-residue protein sequence, read N- to C-terminus: Triosephosphate isomerase (251 aa).

9–11 (NWK) is a binding site for substrate. H96 (electrophile) is an active-site residue. E167 (proton acceptor) is an active-site residue. Substrate is bound by residues G173, S213, and 234 to 235 (GG).

It belongs to the triosephosphate isomerase family. Homodimer.

It localises to the cytoplasm. It carries out the reaction D-glyceraldehyde 3-phosphate = dihydroxyacetone phosphate. Its pathway is carbohydrate biosynthesis; gluconeogenesis. The protein operates within carbohydrate degradation; glycolysis; D-glyceraldehyde 3-phosphate from glycerone phosphate: step 1/1. In terms of biological role, involved in the gluconeogenesis. Catalyzes stereospecifically the conversion of dihydroxyacetone phosphate (DHAP) to D-glyceraldehyde-3-phosphate (G3P). The sequence is that of Triosephosphate isomerase from Bacteroides fragilis (strain ATCC 25285 / DSM 2151 / CCUG 4856 / JCM 11019 / LMG 10263 / NCTC 9343 / Onslow / VPI 2553 / EN-2).